The sequence spans 268 residues: Undecaprenyl-diphosphatase (268 aa).

8 consecutive transmembrane segments (helical) span residues 4–24, 50–70, 84–104, 109–129, 144–164, 185–205, 214–234, and 247–267; these read STTL…FIPV, IQLG…VSVI, VAVL…HGFI, FETP…LLFV, LPLN…VPGV, AEFS…FDLF, SALG…VLVV, and ALFG…LLAG.

Belongs to the UppP family.

It is found in the cell inner membrane. The enzyme catalyses di-trans,octa-cis-undecaprenyl diphosphate + H2O = di-trans,octa-cis-undecaprenyl phosphate + phosphate + H(+). In terms of biological role, catalyzes the dephosphorylation of undecaprenyl diphosphate (UPP). Confers resistance to bacitracin. This Cereibacter sphaeroides (strain ATCC 17029 / ATH 2.4.9) (Rhodobacter sphaeroides) protein is Undecaprenyl-diphosphatase.